The following is a 315-amino-acid chain: Taste receptor type 2 member 129 (315 aa).

Over 1 to 9 the chain is Extracellular; it reads MDGIIQIIS. A helical transmembrane segment spans residues 10–30; it reads AFIVIIEIIIGWFGNGFIVLV. The Cytoplasmic segment spans residues 31–46; sequence NCMHWIKRRRISTVNQ. Residues 47–67 form a helical membrane-spanning segment; the sequence is ILTALAFSRIYLLLTVFTVIL. The Extracellular segment spans residues 68-101; the sequence is ASVQYSNILVTRREVKVIIFHLITSNHFSMWLAA. A helical membrane pass occupies residues 102-122; that stretch reads CLGLFYFLKIANFSNFIFVFL. Over 123–128 the chain is Cytoplasmic; sequence KKRVNK. A helical transmembrane segment spans residues 129–149; that stretch reads VVSGTLLMSLVFLFLNTLLIN. The Extracellular portion of the chain corresponds to 150–185; sequence SYIDAQIDDYRGYLLYDFTSNITVSFYRVILVINNC. N-linked (GlcNAc...) asparagine glycosylation occurs at N170. Residues 186–206 traverse the membrane as a helical segment; sequence IFTSIPFALSQSTFLMLIFSL. The Cytoplasmic segment spans residues 207–233; the sequence is WRHYKKMQQHAQRCRDTLTNAHIKVLQ. A helical membrane pass occupies residues 234-254; that stretch reads TMIMYVLLSAIFFLFLSMQIW. At 255–266 the chain is on the extracellular side; it reads RNKLMENILFIR. The chain crosses the membrane as a helical span at residues 267–287; the sequence is FCETVAAVFPSGHSCVLIWGD. The Cytoplasmic segment spans residues 288 to 315; it reads TNLRQTFLSVLWWLKHRFTLWVPKLYCR.

The protein belongs to the G-protein coupled receptor T2R family.

The protein resides in the membrane. Its function is as follows. Putative taste receptor which may play a role in the perception of bitterness. The protein is Taste receptor type 2 member 129 of Rattus norvegicus (Rat).